The chain runs to 327 residues: MSKKVKVAVTGAAGQIGYALLFRIASGQMFGPDTAVELQLLELEQAIPAAKGVIMELDDCAFPLLEKVSVSSNIDEAFRDINWALLVGSVPRKAGMERGDLLKINGGIFTTQGKAIEKNAASDVRVLVVGNPCNTNALIAMNNAKGVPSDRWFAMTGLDENRAKTQLAQKAGVLVKDVSNVAIWGNHSATQYPDFFNAKVNGKPATDVISDHDWLKGDFISTVQKRGAAIIAARGASSAASAANAVVDTVHNIVTPTKPGDWFSAACHSNGEYGVDKGLIFGYPLKSDGKKVEIVTGLEINAFGKEKFDITHNELKEERNEVKDMLG.

11-17 (GAAGQIG) is an NAD(+) binding site. 2 residues coordinate substrate: arginine 92 and arginine 98. NAD(+)-binding positions include asparagine 105, glutamine 112, and 129–131 (VGN). Substrate-binding residues include asparagine 131 and arginine 162. Catalysis depends on histidine 187, which acts as the Proton acceptor.

Belongs to the LDH/MDH superfamily. MDH type 2 family.

It catalyses the reaction (S)-malate + NAD(+) = oxaloacetate + NADH + H(+). Functionally, catalyzes the reversible oxidation of malate to oxaloacetate. The chain is Malate dehydrogenase from Leptospira biflexa serovar Patoc (strain Patoc 1 / Ames).